Here is a 466-residue protein sequence, read N- to C-terminus: UDP-glycosyltransferase 79 (466 aa).

The active-site Proton acceptor is His27. His27 provides a ligand contact to UDP-alpha-D-glucose. The active-site Charge relay is Asp120. Ser142, Thr291, Phe343, Cys344, His361, Trp364, Asn365, Ser366, Glu369, Asp385, and Gln386 together coordinate UDP-alpha-D-glucose. 4 residues coordinate UDP: Thr291, Phe343, Cys344, and His361. The UDP site is built by Asn365, Ser366, and Glu369.

This sequence belongs to the UDP-glycosyltransferase family.

Its function is as follows. Involved in the detoxification of the Fusarium mycotoxin deoxynivalenol by the transfer of glucose from UDP-D-glucose to the hydroxyl group at C-3, forming deoxynivalenol-3-O-beta-D-glucoside. The chain is UDP-glycosyltransferase 79 from Oryza sativa subsp. japonica (Rice).